Reading from the N-terminus, the 786-residue chain is Endonuclease MutS2 (786 aa).

G335–T342 is a binding site for ATP. The 76-residue stretch at L711–K786 folds into the Smr domain.

It belongs to the DNA mismatch repair MutS family. MutS2 subfamily. Homodimer. Binds to stalled ribosomes, contacting rRNA.

Functionally, endonuclease that is involved in the suppression of homologous recombination and thus may have a key role in the control of bacterial genetic diversity. Acts as a ribosome collision sensor, splitting the ribosome into its 2 subunits. Detects stalled/collided 70S ribosomes which it binds and splits by an ATP-hydrolysis driven conformational change. Acts upstream of the ribosome quality control system (RQC), a ribosome-associated complex that mediates the extraction of incompletely synthesized nascent chains from stalled ribosomes and their subsequent degradation. Probably generates substrates for RQC. In Bacillus thuringiensis (strain Al Hakam), this protein is Endonuclease MutS2.